Here is a 930-residue protein sequence, read N- to C-terminus: Vacuolar membrane protease (930 aa).

The interval 1-28 is disordered; that stretch reads MPQEEVHDTSSVSDDNLTNTGGGGSNYY. Residues 1–49 are Cytoplasmic-facing; that stretch reads MPQEEVHDTSSVSDDNLTNTGGGGSNYYNSHNQPNVFVRAIRSIFGYRK. A helical transmembrane segment spans residues 50–70; sequence TSLTLFVILTIIFTIALSLYD. At 71 to 379 the chain is on the vacuolar side; that stretch reads NNLDLTIELP…YFFSSPISAL (309 aa). N163 is a glycosylation site (N-linked (GlcNAc...) asparagine). The Zn(2+) site is built by H177 and D189. The active-site Proton acceptor is E222. Residues E223, E248, and H320 each coordinate Zn(2+). An N-linked (GlcNAc...) asparagine glycan is attached at N354. Residues 380-400 traverse the membrane as a helical segment; the sequence is VTINSVLIVLFPILSGPLLFI. The Cytoplasmic portion of the chain corresponds to 401–411; the sequence is TVRYKKWKIGT. Residues 412-432 form a helical membrane-spanning segment; sequence SNFLSLPLAIVLTVAIVMIVV. At 433-449 the chain is on the vacuolar side; it reads NQGFQIANPFLPSSHPL. A helical transmembrane segment spans residues 450–470; sequence LLVATTTSISLLIYYVFLNGV. Topologically, residues 471-480 are cytoplasmic; that stretch reads NWVSPSGDQK. The chain crosses the membrane as a helical span at residues 481–501; that stretch reads LITIIEISFIYWLILIYVTHG. Residues 502–514 are Vacuolar-facing; the sequence is LSQNKIGDDHTGE. The chain crosses the membrane as a helical span at residues 515-535; it reads FPFTVLFFLEATASLFGLIGW. The Cytoplasmic segment spans residues 536–598; that stretch reads TFSRSIKQSS…FGYDWSLQYL (63 aa). Residues 542-570 are disordered; sequence KQSSNDGSDEPLLTGTAERYGSDDTDEDE. A helical membrane pass occupies residues 599–619; it reads LIVPISSLIIFNSGWLVLDGI. The N-linked (GlcNAc...) asparagine glycan is linked to N620. Residues 620–631 are Vacuolar-facing; the sequence is NKSIQESFAAEN. A helical membrane pass occupies residues 632-652; the sequence is LIYLLIQLFSQFWILPILPFV. At 653 to 657 the chain is on the cytoplasmic side; the sequence is YKLNR. Residues 658 to 678 traverse the membrane as a helical segment; that stretch reads FIVFGLTIFAISGVALISFLD. The Vacuolar portion of the chain corresponds to 679-930; that stretch reads PFNQENPLKL…LVSVSLKIEV (252 aa). N-linked (GlcNAc...) asparagine glycosylation is found at N697, N768, N808, and N890.

This sequence belongs to the peptidase M28 family. Zn(2+) serves as cofactor.

The protein resides in the vacuole membrane. In terms of biological role, may be involved in vacuolar sorting and osmoregulation. The sequence is that of Vacuolar membrane protease from Candida dubliniensis (strain CD36 / ATCC MYA-646 / CBS 7987 / NCPF 3949 / NRRL Y-17841) (Yeast).